A 95-amino-acid chain; its full sequence is Small ribosomal subunit protein bS6 (95 aa).

Belongs to the bacterial ribosomal protein bS6 family.

Binds together with bS18 to 16S ribosomal RNA. This Corynebacterium urealyticum (strain ATCC 43042 / DSM 7109) protein is Small ribosomal subunit protein bS6.